Reading from the N-terminus, the 368-residue chain is Alanine racemase (368 aa).

The active-site Proton acceptor; specific for D-alanine is Lys-40. Position 40 is an N6-(pyridoxal phosphate)lysine (Lys-40). Position 134 (Arg-134) interacts with substrate. Tyr-263 serves as the catalytic Proton acceptor; specific for L-alanine. Residue Met-310 participates in substrate binding.

This sequence belongs to the alanine racemase family. Requires pyridoxal 5'-phosphate as cofactor.

The enzyme catalyses L-alanine = D-alanine. The protein operates within amino-acid biosynthesis; D-alanine biosynthesis; D-alanine from L-alanine: step 1/1. Its function is as follows. Catalyzes the interconversion of L-alanine and D-alanine. May also act on other amino acids. This is Alanine racemase (alr) from Listeria monocytogenes serotype 4a (strain HCC23).